Reading from the N-terminus, the 329-residue chain is Malate dehydrogenase (329 aa).

Residue G12–G18 participates in NAD(+) binding. Substrate-binding residues include R93 and R99. Residues N106, Q113, and T130–N132 each bind NAD(+). Residues N132 and R163 each coordinate substrate. The Proton acceptor role is filled by H188.

The protein belongs to the LDH/MDH superfamily. MDH type 2 family.

The enzyme catalyses (S)-malate + NAD(+) = oxaloacetate + NADH + H(+). In terms of biological role, catalyzes the reversible oxidation of malate to oxaloacetate. The protein is Malate dehydrogenase of Mycobacterium leprae (strain TN).